Here is a 525-residue protein sequence, read N- to C-terminus: Glucose-6-phosphate isomerase (525 aa).

The active-site Proton donor is the Glu356. Active-site residues include His387 and Lys502.

This sequence belongs to the GPI family.

The protein localises to the cytoplasm. It carries out the reaction alpha-D-glucose 6-phosphate = beta-D-fructose 6-phosphate. Its pathway is carbohydrate biosynthesis; gluconeogenesis. The protein operates within carbohydrate degradation; glycolysis; D-glyceraldehyde 3-phosphate and glycerone phosphate from D-glucose: step 2/4. Its function is as follows. Catalyzes the reversible isomerization of glucose-6-phosphate to fructose-6-phosphate. The protein is Glucose-6-phosphate isomerase of Treponema denticola (strain ATCC 35405 / DSM 14222 / CIP 103919 / JCM 8153 / KCTC 15104).